The primary structure comprises 341 residues: Mitochondrial transcription factor 1 (341 aa).

4 residues coordinate S-adenosyl-L-methionine: Leu23, Glu77, Asp101, and Asn137.

Belongs to the class I-like SAM-binding methyltransferase superfamily. rRNA adenine N(6)-methyltransferase family.

It localises to the mitochondrion intermembrane space. Its function is as follows. Mitochondrial transcription factor that confers selective promoter recognition on the core subunit of the yeast mitochondrial RNA polymerase. Interacts with DNA in a non-specific manner. The protein is Mitochondrial transcription factor 1 (MTF1) of Saccharomyces cerevisiae (strain ATCC 204508 / S288c) (Baker's yeast).